Reading from the N-terminus, the 449-residue chain is Putative glycosyltransferase 7 (449 aa).

Over 1–32 (MVSPETSSSHYQSSPMAKYAGTRTRPVVCISD) the chain is Cytoplasmic. A helical; Signal-anchor for type II membrane protein membrane pass occupies residues 33 to 53 (VVLFLGGAFMSLILVWSFFSF). At 54 to 449 (SSISPNLTVK…VPFDYPDEPW (396 aa)) the chain is on the lumenal side. 3 N-linked (GlcNAc...) asparagine glycosylation sites follow: asparagine 59, asparagine 123, and asparagine 332.

The protein belongs to the glycosyltransferase 34 family.

It localises to the golgi apparatus membrane. Functionally, probable glycosyltransferase that may be involved in the biosynthesis of xyloglucan. The polypeptide is Putative glycosyltransferase 7 (GT7) (Arabidopsis thaliana (Mouse-ear cress)).